The primary structure comprises 148 residues: Ribonuclease H (148 aa).

The RNase H type-1 domain occupies 3-144 (DKEQVVIYTD…ADQLANRGVA (142 aa)). Mg(2+) is bound by residues Asp-12, Glu-50, Asp-72, and Asp-136. The tract at residues 125 to 148 (GHTGDPGNERADQLANRGVAELPR) is disordered.

It belongs to the RNase H family. In terms of assembly, monomer. Requires Mg(2+) as cofactor.

Its subcellular location is the cytoplasm. It carries out the reaction Endonucleolytic cleavage to 5'-phosphomonoester.. In terms of biological role, endonuclease that specifically degrades the RNA of RNA-DNA hybrids. This chain is Ribonuclease H, found in Pseudomonas aeruginosa (strain LESB58).